Here is a 180-residue protein sequence, read N- to C-terminus: Progesterone receptor (180 aa).

The segment at 1-11 adopts an NR C4-type zinc-finger fold; sequence KNCPACRLRKC. A DNA-binding region (nuclear receptor) is located at residues 1 to 16; it reads KNCPACRLRKCCQAGM. Ser-60 bears the Phosphoserine mark. Residues 63–180 enclose the NR LBD domain; the sequence is QEIQLFPPLI…QRMKESSFYS (118 aa). The tract at residues 71–180 is AF2; mediates transcriptional activation; sequence LINLLLSIEP…QRMKESSFYS (110 aa). Arg-150 lines the progesterone pocket.

It belongs to the nuclear hormone receptor family. NR3 subfamily. In terms of assembly, interacts with SMARD1 and UNC45A. Interacts with CUEDC2; the interaction promotes ubiquitination, decreases sumoylation, and represses transcriptional activity. Interacts with PIAS3; the interaction promotes sumoylation of PR in a hormone-dependent manner, inhibits DNA-binding, and alters nuclear export. Interacts with SP1; the interaction requires ligand-induced phosphorylation by ERK1/2-MAPK. Interacts with PRMT2. Interacts with NCOA2 and NCOA1. Interacts with KLF9. Interacts with GTF2B. Post-translationally, phosphorylated on multiple serine sites. Several of these sites are hormone-dependent. Sumoylation is hormone-dependent and represses transcriptional activity. Sumoylation on all three sites is enhanced by PIAS3. Desumoylated by SENP1. Sumoylation is repressed by ubiquitination and modulated by phosphorylation. In terms of processing, ubiquitination is hormone-dependent and represses sumoylation. Post-translationally, palmitoylated by ZDHHC7 and ZDHHC21. Palmitoylation is required for plasma membrane targeting and for rapid intracellular signaling via ERK and AKT kinases and cAMP generation.

The protein localises to the nucleus. It is found in the cytoplasm. In terms of biological role, the steroid hormones and their receptors are involved in the regulation of eukaryotic gene expression and affect cellular proliferation and differentiation in target tissues. Transcriptional activator of several progesteron-dependent promoters in a variety of cell types. Involved in activation of SRC-dependent MAPK signaling on hormone stimulation. This Notamacropus eugenii (Tammar wallaby) protein is Progesterone receptor (PGR).